The following is a 292-amino-acid chain: MDEEAKIRTCQLLDLPWEDVLIPHILCYLPLQHLVSLQRVSKQFHSLIQVYLTNCRTFDLTSIGPSIPKEAFCSMLKDNKVLHSLSLQNCSDWVTDKELLPVIGQNQHLQRVDMSGCVCLTRHSLVAVSLSCMHLQHLGLAHCEWVDSLSLRSLADHCGGLQSIDLTACRQLKDDAICYLAKKCLKLRSLSLAVNANITDESVEEVAKNCRGLEQLDLTGCLRVRNQSIRTLAEYCPKLQSLKVNHCHNVTESSLDPLRKRNVVIDVEPPLQRALVLLQDVLGFAPFINLQI.

Residues 12-59 (LLDLPWEDVLIPHILCYLPLQHLVSLQRVSKQFHSLIQVYLTNCRTFD) form the F-box domain. LRR repeat units lie at residues 134–155 (HLQH…RSLA), 160–181 (GLQS…CYLA), 186–207 (KLRS…EEVA), 212–233 (GLEQ…RTLA), and 238–259 (KLQS…DPLR).

It belongs to the FBXL15 family. As to quaternary structure, part of the SCF (SKP1-CUL1-F-box) E3 ubiquitin-protein ligase complex SCF(FBXL15).

It localises to the cytoplasm. Its pathway is protein modification; protein ubiquitination. Functionally, substrate recognition component of a SCF (SKP1-CUL1-F-box protein) E3 ubiquitin-protein ligase complex which mediates the ubiquitination and subsequent proteasomal degradation of target proteins. Acts as a positive regulator of the BMP signaling pathway. Required for dorsal/ventral pattern formation. In Dicentrarchus labrax (European seabass), this protein is F-box/LRR-repeat protein 15 (fbxl15).